The primary structure comprises 611 residues: 4-hydroxy-3-methylbut-2-en-1-yl diphosphate synthase (flavodoxin) (611 aa).

4 residues coordinate [4Fe-4S] cluster: Cys-520, Cys-523, Cys-554, and Glu-561.

It belongs to the IspG family. The cofactor is [4Fe-4S] cluster.

The enzyme catalyses (2E)-4-hydroxy-3-methylbut-2-enyl diphosphate + oxidized [flavodoxin] + H2O + 2 H(+) = 2-C-methyl-D-erythritol 2,4-cyclic diphosphate + reduced [flavodoxin]. It functions in the pathway isoprenoid biosynthesis; isopentenyl diphosphate biosynthesis via DXP pathway; isopentenyl diphosphate from 1-deoxy-D-xylulose 5-phosphate: step 5/6. In terms of biological role, converts 2C-methyl-D-erythritol 2,4-cyclodiphosphate (ME-2,4cPP) into 1-hydroxy-2-methyl-2-(E)-butenyl 4-diphosphate. The polypeptide is 4-hydroxy-3-methylbut-2-en-1-yl diphosphate synthase (flavodoxin) (Parabacteroides distasonis (strain ATCC 8503 / DSM 20701 / CIP 104284 / JCM 5825 / NCTC 11152)).